The primary structure comprises 320 residues: Malate dehydrogenase (320 aa).

NAD(+) is bound by residues 10 to 15 (GSGMIG) and D34. The substrate site is built by R83 and R89. NAD(+) is bound by residues N96 and 119-121 (ITN). Substrate is bound by residues N121 and R152. The active-site Proton acceptor is the H176.

This sequence belongs to the LDH/MDH superfamily. MDH type 3 family.

The catalysed reaction is (S)-malate + NAD(+) = oxaloacetate + NADH + H(+). Its function is as follows. Catalyzes the reversible oxidation of malate to oxaloacetate. The protein is Malate dehydrogenase of Bartonella henselae (strain ATCC 49882 / DSM 28221 / CCUG 30454 / Houston 1) (Rochalimaea henselae).